The primary structure comprises 326 residues: Pyruvate dehydrogenase E1 component subunit beta (326 aa).

Position 60 (E60) interacts with thiamine diphosphate. Positions 113, 161, 162, and 166 each coordinate K(+).

As to quaternary structure, heterodimer of an alpha and a beta chain. Requires thiamine diphosphate as cofactor.

The protein localises to the plastid. Its subcellular location is the chloroplast. The catalysed reaction is N(6)-[(R)-lipoyl]-L-lysyl-[protein] + pyruvate + H(+) = N(6)-[(R)-S(8)-acetyldihydrolipoyl]-L-lysyl-[protein] + CO2. Its function is as follows. The pyruvate dehydrogenase complex catalyzes the overall conversion of pyruvate to acetyl-CoA and CO(2). It contains multiple copies of three enzymatic components: pyruvate dehydrogenase (E1), dihydrolipoamide acetyltransferase (E2) and lipoamide dehydrogenase (E3). The sequence is that of Pyruvate dehydrogenase E1 component subunit beta (pdhB) from Chaetosphaeridium globosum (Charophycean green alga).